Reading from the N-terminus, the 251-residue chain is Hydroxyacylglutathione hydrolase (251 aa).

His-53, His-55, Asp-57, His-58, His-109, Asp-126, and His-164 together coordinate Zn(2+).

Belongs to the metallo-beta-lactamase superfamily. Glyoxalase II family. In terms of assembly, monomer. Zn(2+) serves as cofactor.

The catalysed reaction is an S-(2-hydroxyacyl)glutathione + H2O = a 2-hydroxy carboxylate + glutathione + H(+). Its pathway is secondary metabolite metabolism; methylglyoxal degradation; (R)-lactate from methylglyoxal: step 2/2. Functionally, thiolesterase that catalyzes the hydrolysis of S-D-lactoyl-glutathione to form glutathione and D-lactic acid. This chain is Hydroxyacylglutathione hydrolase, found in Wigglesworthia glossinidia brevipalpis.